Reading from the N-terminus, the 84-residue chain is UPF0297 protein Csac_1773 (84 aa).

The protein belongs to the UPF0297 family.

The protein is UPF0297 protein Csac_1773 of Caldicellulosiruptor saccharolyticus (strain ATCC 43494 / DSM 8903 / Tp8T 6331).